The chain runs to 291 residues: Urease accessory protein UreD (291 aa).

It belongs to the UreD family. In terms of assembly, ureD, UreF and UreG form a complex that acts as a GTP-hydrolysis-dependent molecular chaperone, activating the urease apoprotein by helping to assemble the nickel containing metallocenter of UreC. The UreE protein probably delivers the nickel.

Its subcellular location is the cytoplasm. Its function is as follows. Required for maturation of urease via the functional incorporation of the urease nickel metallocenter. The chain is Urease accessory protein UreD from Acinetobacter baumannii (strain SDF).